The chain runs to 422 residues: Interleukin-11 receptor subunit alpha (422 aa).

A signal peptide spans Met1–Ala22. Residues Ser24–Ala370 are Extracellular-facing. The region spanning Pro27–Gly110 is the Ig-like C2-type domain. 3 disulfides stabilise this stretch: Cys48–Cys94, Cys120–Cys130, and Cys170–Cys180. Fibronectin type-III domains are found at residues Pro112–Asp219 and Pro220–Thr317. An N-linked (GlcNAc...) asparagine glycan is attached at Asn127. A glycan (N-linked (GlcNAc...) asparagine) is linked at Asn194. The short motif at Trp304 to Ser308 is the WSXWS motif element. The interval Glu335–Arg355 is disordered. Residues Ser371–Leu391 traverse the membrane as a helical segment. The Cytoplasmic portion of the chain corresponds to Arg392–Leu422. The interval Lys398 to Leu422 is disordered. Residues Val413–Leu422 are compositionally biased toward basic and acidic residues.

This sequence belongs to the type I cytokine receptor family. Type 3 subfamily. In terms of assembly, on IL11 binding, forms a multimer complex with IL6ST/gp130. Post-translationally, a short soluble form is also released from the membrane by proteolysis. The sIL11RA is formed either by limited proteolysis of membrane-bound receptors, a process referred to as ectodomain shedding, or directly secreted from the cells after alternative mRNA splicing. mIL11RA is cleaved by the proteases ADAM10, ELANE and PRTN3. As to expression, expressed in a number of cell lines, including the myelogenous leukemia cell line K-562, the megakaryocytic leukemia cell line M-07e, the erythroleukemia cell line TF-1, and the osteosarcoma cell lines, MG-63 and SaOS-2. Also expressed in normal and malignant prostate epithelial cell lines. Expression levels are increased in prostate carcinoma.

The protein localises to the membrane. Its subcellular location is the secreted. Functionally, receptor for interleukin-11 (IL11). The receptor systems for IL6, LIF, OSM, CNTF, IL11 and CT1 can utilize IL6ST for initiating signal transmission. The IL11/IL11RA/IL6ST complex may be involved in the control of proliferation and/or differentiation of skeletogenic progenitor or other mesenchymal cells. Essential for the normal development of craniofacial bones and teeth. Restricts suture fusion and tooth number. Soluble form of IL11 receptor (sIL11RA) that acts as an agonist of IL11 activity. The IL11:sIL11RA complex binds to IL6ST/gp130 on cell surfaces and induces signaling also on cells that do not express membrane-bound IL11RA in a process called IL11 trans-signaling. In Homo sapiens (Human), this protein is Interleukin-11 receptor subunit alpha.